A 292-amino-acid polypeptide reads, in one-letter code: Diaminopimelate epimerase (292 aa).

Residues Asn-13, Gln-46, and Asn-66 each coordinate substrate. The Proton donor role is filled by Cys-75. Residues Gly-76 to Asn-77, Asn-170, Asn-203, and Glu-221 to Arg-222 contribute to the substrate site. The active-site Proton acceptor is Cys-230. Gly-231 to Thr-232 is a binding site for substrate.

It belongs to the diaminopimelate epimerase family. Homodimer.

Its subcellular location is the cytoplasm. It carries out the reaction (2S,6S)-2,6-diaminopimelate = meso-2,6-diaminopimelate. It participates in amino-acid biosynthesis; L-lysine biosynthesis via DAP pathway; DL-2,6-diaminopimelate from LL-2,6-diaminopimelate: step 1/1. Functionally, catalyzes the stereoinversion of LL-2,6-diaminopimelate (L,L-DAP) to meso-diaminopimelate (meso-DAP), a precursor of L-lysine and an essential component of the bacterial peptidoglycan. The sequence is that of Diaminopimelate epimerase from Acidovorax ebreus (strain TPSY) (Diaphorobacter sp. (strain TPSY)).